The sequence spans 101 residues: Ubiquitin-related modifier 1 (101 aa).

A 1-thioglycine modification is found at glycine 101. Glycine 101 is covalently cross-linked (Glycyl lysine isopeptide (Gly-Lys) (interchain with K-? in acceptor proteins)).

The protein belongs to the URM1 family. C-terminal thiocarboxylation occurs in 2 steps, it is first acyl-adenylated (-COAMP) via the hesA/moeB/thiF part of UBA4, then thiocarboxylated (-COSH) via the rhodanese domain of UBA4.

The protein localises to the cytoplasm. It functions in the pathway tRNA modification; 5-methoxycarbonylmethyl-2-thiouridine-tRNA biosynthesis. Acts as a sulfur carrier required for 2-thiolation of mcm(5)S(2)U at tRNA wobble positions of cytosolic tRNA(Lys), tRNA(Glu) and tRNA(Gln). Serves as sulfur donor in tRNA 2-thiolation reaction by being thiocarboxylated (-COSH) at its C-terminus by the MOCS3 homolog UBA4. The sulfur is then transferred to tRNA to form 2-thiolation of mcm(5)S(2)U. Prior mcm(5) tRNA modification by the elongator complex is required for 2-thiolation. Also acts as a ubiquitin-like protein (UBL) that is covalently conjugated via an isopeptide bond to lysine residues of target proteins such as AHP1. The thiocarboxylated form serves as substrate for conjugation and oxidative stress specifically induces the formation of UBL-protein conjugates. The chain is Ubiquitin-related modifier 1 from Kluyveromyces lactis (strain ATCC 8585 / CBS 2359 / DSM 70799 / NBRC 1267 / NRRL Y-1140 / WM37) (Yeast).